Consider the following 205-residue polypeptide: Gap junction epsilon-1 protein (205 aa).

Over 1 to 22 (MSLNYIKNFYEGCVKPPTVIGQ) the chain is Cytoplasmic. Residues 23-43 (FHTLFFGSVRMFFLGVLGFAV) form a helical membrane-spanning segment. At 44–74 (YGNEALHFSCDPDKREINLFCYNQFRPITPQ) the chain is on the extracellular side. 2 disulfides stabilise this stretch: Cys53/Cys161 and Cys64/Cys147. The helical transmembrane segment at 75–95 (VFWALQLVIVLLPGAIFHLYA) threads the bilayer. At 96-111 (ACKSINQDCILQKPVY) the chain is on the cytoplasmic side. A helical membrane pass occupies residues 112-132 (TVIYVLSVLLRISLEVFAFWL). The Extracellular portion of the chain corresponds to 133–170 (QIHLFGFQVKPIYLCDTESLGKKPNILKCMVPEHFEKT). Residues 171 to 191 (IFLIAMYTFTVITMVLCVAEV) form a helical membrane-spanning segment. Residues 192–205 (FEIIFRRSCFLFKR) lie on the Cytoplasmic side of the membrane.

The protein belongs to the connexin family. Beta-type (group I) subfamily. As to quaternary structure, a connexon is composed of a hexamer of connexins. Highly expressed in lens, where it is mainly found in lens fibers and to a lesser extent in lens epithelium. Weakly expressed in retina. Not detected in other tissues tested.

It localises to the cell membrane. Its function is as follows. Mediates calcium-independent ATP release, suggesting activity as a hemichannel. Does not form functional gap junctions. May play a non-essential role in eye lens development. This chain is Gap junction epsilon-1 protein, found in Mus musculus (Mouse).